Consider the following 624-residue polypeptide: Probable pectinesterase/pectinesterase inhibitor 47 (624 aa).

The first 19 residues, 1-19 (MQTHSSSLVFLALLCLSWA), serve as a signal peptide directing secretion. Residues 24–88 (PTRPPSQPPS…PSPLPPNIAC (65 aa)) are disordered. Positions 25 to 84 (TRPPSQPPSHPPIQPSSQPPTQPPSQPPTQPPTQPPSHPPTQPPTPPPSQSPSQPSPLPP) are enriched in pro residues. The interval 74-236 (QSPSQPSPLP…TRLYSVSLGL (163 aa)) is pectinesterase inhibitor 47. 4 N-linked (GlcNAc...) asparagine glycosylation sites follow: asparagine 225, asparagine 330, asparagine 369, and asparagine 376. Residues 307–606 (AVTVGPYETD…FTVYNFTLGD (300 aa)) form a pectinesterase 47 region. A substrate-binding site is contributed by threonine 385. N-linked (GlcNAc...) asparagine glycosylation is present at asparagine 387. A substrate-binding site is contributed by glutamine 415. Aspartate 438 serves as the catalytic Proton donor; for pectinesterase activity. Cysteine 452 and cysteine 472 form a disulfide bridge. Residue aspartate 459 is the Nucleophile; for pectinesterase activity of the active site. N-linked (GlcNAc...) asparagine glycosylation is present at asparagine 505. The substrate site is built by arginine 527 and tryptophan 529. N-linked (GlcNAc...) asparagine glycans are attached at residues asparagine 555, asparagine 596, and asparagine 601.

The protein in the N-terminal section; belongs to the PMEI family. It in the C-terminal section; belongs to the pectinesterase family.

The protein localises to the secreted. Its subcellular location is the cell wall. The catalysed reaction is [(1-&gt;4)-alpha-D-galacturonosyl methyl ester](n) + n H2O = [(1-&gt;4)-alpha-D-galacturonosyl](n) + n methanol + n H(+). It functions in the pathway glycan metabolism; pectin degradation; 2-dehydro-3-deoxy-D-gluconate from pectin: step 1/5. Functionally, acts in the modification of cell walls via demethylesterification of cell wall pectin. This is Probable pectinesterase/pectinesterase inhibitor 47 (PME47) from Arabidopsis thaliana (Mouse-ear cress).